Reading from the N-terminus, the 249-residue chain is Putative [LysW]-aminoadipate/[LysW]-glutamate kinase (249 aa).

2 residues coordinate substrate: R63 and N166.

Belongs to the acetylglutamate kinase family. LysZ subfamily.

It is found in the cytoplasm. The enzyme catalyses [amino-group carrier protein]-C-terminal-N-(1,4-dicarboxybutan-1-yl)-L-glutamine + ATP = [amino-group carrier protein]-C-terminal-N-(1-carboxy-5-phosphooxy-5-oxopentan-1-yl)-L-glutamine + ADP. It catalyses the reaction [amino-group carrier protein]-C-terminal-gamma-(L-glutamyl)-L-glutamate + ATP = [amino-group carrier protein]-C-terminal-gamma-(5-phospho-L-glutamyl)-L-glutamate + ADP. The protein operates within amino-acid biosynthesis; L-lysine biosynthesis via AAA pathway; L-lysine from L-alpha-aminoadipate (Thermus route): step 2/5. It participates in amino-acid biosynthesis; L-arginine biosynthesis. In terms of biological role, involved in both the arginine and lysine biosynthetic pathways. Phosphorylates the LysW-bound precursors glutamate (for arginine biosynthesis), respectively alpha-aminoadipate (for lysine biosynthesis). The sequence is that of Putative [LysW]-aminoadipate/[LysW]-glutamate kinase from Pyrococcus furiosus (strain ATCC 43587 / DSM 3638 / JCM 8422 / Vc1).